A 458-amino-acid polypeptide reads, in one-letter code: UDP-N-acetylmuramoylalanine--D-glutamate ligase (458 aa).

124–130 contacts ATP; that stretch reads GSDGKTT.

This sequence belongs to the MurCDEF family.

Its subcellular location is the cytoplasm. The enzyme catalyses UDP-N-acetyl-alpha-D-muramoyl-L-alanine + D-glutamate + ATP = UDP-N-acetyl-alpha-D-muramoyl-L-alanyl-D-glutamate + ADP + phosphate + H(+). The protein operates within cell wall biogenesis; peptidoglycan biosynthesis. In terms of biological role, cell wall formation. Catalyzes the addition of glutamate to the nucleotide precursor UDP-N-acetylmuramoyl-L-alanine (UMA). In Clostridium tetani (strain Massachusetts / E88), this protein is UDP-N-acetylmuramoylalanine--D-glutamate ligase.